The chain runs to 115 residues: Gonadotropin subunit beta-2 (115 aa).

Cystine bridges form between cysteine 6–cysteine 54, cysteine 20–cysteine 69, cysteine 23–cysteine 107, cysteine 31–cysteine 85, cysteine 35–cysteine 87, and cysteine 90–cysteine 97. A glycan (N-linked (GlcNAc...) asparagine) is linked at asparagine 10.

It belongs to the glycoprotein hormones subunit beta family. Heterodimer of an alpha and a beta chain.

It localises to the secreted. In terms of biological role, involved in gametogenesis and steroidogenesis. The chain is Gonadotropin subunit beta-2 (cgbb) from Thunnus obesus (Bigeye tuna).